Here is a 254-residue protein sequence, read N- to C-terminus: Triosephosphate isomerase (254 aa).

10–12 is a substrate binding site; it reads NWK. The active-site Electrophile is the H99. E169 serves as the catalytic Proton acceptor. Substrate-binding positions include G175, S215, and 236-237; that span reads GG.

Belongs to the triosephosphate isomerase family. Homodimer.

The protein localises to the cytoplasm. It catalyses the reaction D-glyceraldehyde 3-phosphate = dihydroxyacetone phosphate. Its pathway is carbohydrate biosynthesis; gluconeogenesis. It functions in the pathway carbohydrate degradation; glycolysis; D-glyceraldehyde 3-phosphate from glycerone phosphate: step 1/1. In terms of biological role, involved in the gluconeogenesis. Catalyzes stereospecifically the conversion of dihydroxyacetone phosphate (DHAP) to D-glyceraldehyde-3-phosphate (G3P). This chain is Triosephosphate isomerase, found in Chlamydia caviae (strain ATCC VR-813 / DSM 19441 / 03DC25 / GPIC) (Chlamydophila caviae).